We begin with the raw amino-acid sequence, 456 residues long: Gamma-aminobutyric acid receptor subunit alpha-1 (456 aa).

An N-terminal signal peptide occupies residues 1–27 (MRKSPGLSDYLWAWILLLSTLTGRSYG). Residues 28 to 253 (QPSLQDELKD…FHLKRKIGYF (226 aa)) lie on the Extracellular side of the membrane. Asn38 carries N-linked (GlcNAc...) asparagine glycosylation. 4-aminobutanoate is bound at residue Arg94. The N-linked (GlcNAc...) asparagine glycan is linked to Asn138. A 4-aminobutanoate-binding site is contributed by Thr157. Cys166 and Cys180 are joined by a disulfide. The helical transmembrane segment at 254 to 274 (VIQTYLPCIMTVILSQVSFWL) threads the bilayer. At 275–279 (NRESV) the chain is on the cytoplasmic side. A helical transmembrane segment spans residues 280 to 301 (PARTVFGVTTVLTMTTLSISAR). Residues 302 to 311 (NSLPKVAYAT) are Extracellular-facing. Residues 312 to 333 (AMDWFIAVCYAFVFSALIEFAT) traverse the membrane as a helical segment. The Cytoplasmic portion of the chain corresponds to 334–421 (VNYFTKRGYA…TFNSVSKIDR (88 aa)). The chain crosses the membrane as a helical span at residues 422–441 (LSRIAFPLLFGIFNLVYWAT). The Extracellular portion of the chain corresponds to 442-456 (YLNREPQLKAPTPHQ).

It belongs to the ligand-gated ion channel (TC 1.A.9) family. Gamma-aminobutyric acid receptor (TC 1.A.9.5) subfamily. GABRA1 sub-subfamily. Heteropentamer, formed by a combination of alpha (GABRA1-6), beta (GABRB1-3), gamma (GABRG1-3), delta (GABRD), epsilon (GABRE), rho (GABRR1-3), pi (GABRP) and theta (GABRQ) subunits, each subunit exhibiting distinct physiological and pharmacological properties. Interacts with UBQLN1. Interacts with TRAK1. Interacts with KIF21B. Identified in a complex of 720 kDa composed of LHFPL4, NLGN2, GABRA1, GABRB2, GABRG2 and GABRB3. Interacts with LHFPL4. Interacts with NLGN2. Interacts with SHISA7; interaction leads to the regulation of GABA(A) receptor trafficking, channel deactivation kinetics and pharmacology.

The protein localises to the postsynaptic cell membrane. It is found in the cell membrane. Its subcellular location is the cytoplasmic vesicle membrane. The enzyme catalyses chloride(in) = chloride(out). Allosterically activated by benzodiazepines, the neuroanesthetic alphaxalone and pentobarbital. Inhibited by the antagonist bicuculline. Potentiated by histamine. Alpha subunit of the heteropentameric ligand-gated chloride channel gated by gamma-aminobutyric acid (GABA), a major inhibitory neurotransmitter in the brain. GABA-gated chloride channels, also named GABA(A) receptors (GABAAR), consist of five subunits arranged around a central pore and contain GABA active binding site(s) located at the alpha and beta subunit interface(s). When activated by GABA, GABAARs selectively allow the flow of chloride anions across the cell membrane down their electrochemical gradient. Alpha-1/GABRA1-containing GABAARs are largely synaptic. Chloride influx into the postsynaptic neuron following GABAAR opening decreases the neuron ability to generate a new action potential, thereby reducing nerve transmission. GABAARs containing alpha-1 and beta-2 or -3 subunits exhibit synaptogenic activity; the gamma-2 subunit being necessary but not sufficient to induce rapid synaptic contacts formation. GABAARs function also as histamine receptor where histamine binds at the interface of two neighboring beta subunits and potentiates GABA response. GABAARs containing alpha, beta and epsilon subunits also permit spontaneous chloride channel activity while preserving the structural information required for GABA-gated openings. Alpha-1-mediated plasticity in the orbitofrontal cortex regulates context-dependent action selection. Together with rho subunits, may also control neuronal and glial GABAergic transmission in the cerebellum. The polypeptide is Gamma-aminobutyric acid receptor subunit alpha-1 (GABRA1) (Macaca fascicularis (Crab-eating macaque)).